A 234-amino-acid chain; its full sequence is Phosphoribosylformylglycinamidine synthase subunit PurQ (234 aa).

Residues 3 to 231 (AAVVVFPGSN…ALYLERRKDH (229 aa)) form the Glutamine amidotransferase type-1 domain. Residue C87 is the Nucleophile of the active site. Catalysis depends on residues H200 and E202.

Part of the FGAM synthase complex composed of 1 PurL, 1 PurQ and 2 PurS subunits.

It is found in the cytoplasm. It carries out the reaction N(2)-formyl-N(1)-(5-phospho-beta-D-ribosyl)glycinamide + L-glutamine + ATP + H2O = 2-formamido-N(1)-(5-O-phospho-beta-D-ribosyl)acetamidine + L-glutamate + ADP + phosphate + H(+). It catalyses the reaction L-glutamine + H2O = L-glutamate + NH4(+). The protein operates within purine metabolism; IMP biosynthesis via de novo pathway; 5-amino-1-(5-phospho-D-ribosyl)imidazole from N(2)-formyl-N(1)-(5-phospho-D-ribosyl)glycinamide: step 1/2. Functionally, part of the phosphoribosylformylglycinamidine synthase complex involved in the purines biosynthetic pathway. Catalyzes the ATP-dependent conversion of formylglycinamide ribonucleotide (FGAR) and glutamine to yield formylglycinamidine ribonucleotide (FGAM) and glutamate. The FGAM synthase complex is composed of three subunits. PurQ produces an ammonia molecule by converting glutamine to glutamate. PurL transfers the ammonia molecule to FGAR to form FGAM in an ATP-dependent manner. PurS interacts with PurQ and PurL and is thought to assist in the transfer of the ammonia molecule from PurQ to PurL. The protein is Phosphoribosylformylglycinamidine synthase subunit PurQ of Pseudothermotoga lettingae (strain ATCC BAA-301 / DSM 14385 / NBRC 107922 / TMO) (Thermotoga lettingae).